The following is a 222-amino-acid chain: MLCIKKPSVASAFNELIPKILKDGEVVETEFEERTKEIRNTIIEITNPKLKKVPEKYPLGEKAVEEYTKNLLYGSKNVFSYDYHQRLFEYPYADEKINQIDYIIEKLNQQKNSRRAVAITWNPKIDIEVSRDERGSVPCLQLVQFLIRNGKLYQTVIFRSNDALLAFVSNAIGLITLGEYIAKKVGVGYGTYTHHAISMHIYVDRDFDYIKKYFPECLKYLW.

Residue cysteine 139 is part of the active site.

The protein belongs to the thymidylate synthase family. Archaeal-type ThyA subfamily. In terms of assembly, monomer.

It localises to the cytoplasm. Its pathway is pyrimidine metabolism; dTTP biosynthesis. Its function is as follows. May catalyze the biosynthesis of dTMP using an unknown cosubstrate. The protein is Putative thymidylate synthase of Methanocaldococcus jannaschii (strain ATCC 43067 / DSM 2661 / JAL-1 / JCM 10045 / NBRC 100440) (Methanococcus jannaschii).